The sequence spans 251 residues: Zinc import ATP-binding protein ZnuC (251 aa).

Positions 5 to 220 (VSLENVSVSF…PEFISMFGPR (216 aa)) constitute an ABC transporter domain. 37–44 (GPNGAGKS) serves as a coordination point for ATP.

This sequence belongs to the ABC transporter superfamily. Zinc importer (TC 3.A.1.15.5) family. The complex is composed of two ATP-binding proteins (ZnuC), two transmembrane proteins (ZnuB) and a solute-binding protein (ZnuA).

The protein localises to the cell inner membrane. It carries out the reaction Zn(2+)(out) + ATP(in) + H2O(in) = Zn(2+)(in) + ADP(in) + phosphate(in) + H(+)(in). Its function is as follows. Part of the ABC transporter complex ZnuABC involved in zinc import. Responsible for energy coupling to the transport system. The chain is Zinc import ATP-binding protein ZnuC from Shigella dysenteriae serotype 1 (strain Sd197).